Consider the following 77-residue polypeptide: Exodeoxyribonuclease 7 small subunit (77 aa).

The protein belongs to the XseB family. As to quaternary structure, heterooligomer composed of large and small subunits.

Its subcellular location is the cytoplasm. It carries out the reaction Exonucleolytic cleavage in either 5'- to 3'- or 3'- to 5'-direction to yield nucleoside 5'-phosphates.. Functionally, bidirectionally degrades single-stranded DNA into large acid-insoluble oligonucleotides, which are then degraded further into small acid-soluble oligonucleotides. In Lysinibacillus sphaericus (strain C3-41), this protein is Exodeoxyribonuclease 7 small subunit.